Reading from the N-terminus, the 696-residue chain is Glycine--tRNA ligase beta subunit (696 aa).

The protein belongs to the class-II aminoacyl-tRNA synthetase family. As to quaternary structure, tetramer of two alpha and two beta subunits.

It localises to the cytoplasm. It catalyses the reaction tRNA(Gly) + glycine + ATP = glycyl-tRNA(Gly) + AMP + diphosphate. This chain is Glycine--tRNA ligase beta subunit, found in Aromatoleum aromaticum (strain DSM 19018 / LMG 30748 / EbN1) (Azoarcus sp. (strain EbN1)).